We begin with the raw amino-acid sequence, 169 residues long: N-alpha-acetyltransferase 50 (169 aa).

The N-acetyltransferase domain maps to 6-155 (IELGDVTPHN…DAHVLQKNLK (150 aa)). T12 carries the post-translational modification Phosphothreonine. Y31 serves as a coordination point for substrate. 2 positions are modified to N6-acetyllysine: K34 and K37. Y73 is an active-site residue. A substrate-binding site is contributed by M75. 77–90 (LGCLAPYRRLGIGT) contributes to the acetyl-CoA binding site. Residue Y110 is modified to Phosphotyrosine. H112 is a catalytic residue. CoA is bound at residue 117-126 (NESAIDFYRK). The interval 138–141 (YYKR) is substrate. An N6-acetyllysine modification is found at K140.

The protein belongs to the acetyltransferase family. GNAT subfamily. As to quaternary structure, component of the N-terminal acetyltransferase E (NatE) complex at least composed of NAA10, NAA15 and NAA50. Interacts with NAA10. Interacts with NAA15. Predominantly interacts with NAA15 in the N-terminal acetyltransferase A complex (NatA complex); the interactions reduce the acetylation activity of the NatA complex. Component of the N-terminal acetyltransferase E (NatE)/HYPK complex at least composed of NAA10, NAA15, NAA50 and HYPK. Within the complex interacts with NAA15. Its capacity to interact with the NatA complex is reduced by HYPK. Interacts with NAA35.

It is found in the cytoplasm. The protein localises to the nucleus. It catalyses the reaction N-terminal L-methionyl-L-alanyl-[protein] + acetyl-CoA = N-terminal N(alpha)-acetyl-L-methionyl-L-alanyl-[protein] + CoA + H(+). The enzyme catalyses N-terminal L-methionyl-L-seryl-[protein] + acetyl-CoA = N-terminal N(alpha)-acetyl-L-methionyl-L-seryl-[protein] + CoA + H(+). The catalysed reaction is N-terminal L-methionyl-L-valyl-[protein] + acetyl-CoA = N-terminal N(alpha)-acetyl-L-methionyl-L-valyl-[protein] + CoA + H(+). It carries out the reaction N-terminal L-methionyl-L-threonyl-[protein] + acetyl-CoA = N-terminal N(alpha)-acetyl-L-methionyl-L-threonyl-[protein] + CoA + H(+). It catalyses the reaction N-terminal L-methionyl-L-lysyl-[protein] + acetyl-CoA = N-terminal N(alpha)-acetyl-L-methionyl-L-lysyl-[protein] + CoA + H(+). The enzyme catalyses N-terminal L-methionyl-L-leucyl-[protein] + acetyl-CoA = N-terminal N(alpha)-acetyl-L-methionyl-L-leucyl-[protein] + CoA + H(+). The catalysed reaction is N-terminal L-methionyl-L-phenylalanyl-[protein] + acetyl-CoA = N-terminal N(alpha)-acetyl-L-methionyl-L-phenylalanyl-[protein] + CoA + H(+). It carries out the reaction N-terminal L-methionyl-L-tyrosyl-[protein] + acetyl-CoA = N-terminal N(alpha)-acetyl-L-methionyl-L-tyrosyl-[protein] + CoA + H(+). Functionally, N-alpha-acetyltransferase that acetylates the N-terminus of proteins that retain their initiating methionine. Has a broad substrate specificity: able to acetylate the initiator methionine of most peptides, except for those with a proline in second position. Also displays N-epsilon-acetyltransferase activity by mediating acetylation of the side chain of specific lysines on proteins. Autoacetylates in vivo. The relevance of N-epsilon-acetyltransferase activity is however unclear: able to acetylate H4 in vitro, but this result has not been confirmed in vivo. Component of N-alpha-acetyltransferase complexes containing NAA10 and NAA15, which has N-alpha-acetyltransferase activity. Does not influence the acetyltransferase activity of NAA10. However, it negatively regulates the N-alpha-acetyltransferase activity of the N-terminal acetyltransferase A complex (also called the NatA complex). The multiprotein complexes probably constitute the major contributor for N-terminal acetylation at the ribosome exit tunnel, with NAA10 acetylating all amino termini that are devoid of methionine and NAA50 acetylating other peptides. Required for sister chromatid cohesion during mitosis by promoting binding of CDCA5/sororin to cohesin: may act by counteracting the function of NAA10. This is N-alpha-acetyltransferase 50 (NAA50) from Bos taurus (Bovine).